A 90-amino-acid polypeptide reads, in one-letter code: Sec-independent protein translocase protein TatA (90 aa).

Residues 1–21 (MGGASIWHWIVVGVIVMLLFG) form a helical membrane-spanning segment. The tract at residues 42 to 90 (GMADEDQPQAPVANQSPPPVSATEPVRTLPPHQGEPAPAANASVDRKVG) is disordered.

Belongs to the TatA/E family. As to quaternary structure, the Tat system comprises two distinct complexes: a TatABC complex, containing multiple copies of TatA, TatB and TatC subunits, and a separate TatA complex, containing only TatA subunits. Substrates initially bind to the TatABC complex, which probably triggers association of the separate TatA complex to form the active translocon.

It localises to the cell inner membrane. In terms of biological role, part of the twin-arginine translocation (Tat) system that transports large folded proteins containing a characteristic twin-arginine motif in their signal peptide across membranes. TatA could form the protein-conducting channel of the Tat system. This Methylobacterium nodulans (strain LMG 21967 / CNCM I-2342 / ORS 2060) protein is Sec-independent protein translocase protein TatA.